The sequence spans 133 residues: Small ribosomal subunit protein uS8 (133 aa).

Belongs to the universal ribosomal protein uS8 family. In terms of assembly, part of the 30S ribosomal subunit. Contacts proteins S5 and S12.

In terms of biological role, one of the primary rRNA binding proteins, it binds directly to 16S rRNA central domain where it helps coordinate assembly of the platform of the 30S subunit. The chain is Small ribosomal subunit protein uS8 from Synechococcus sp. (strain RCC307).